The sequence spans 396 residues: Probable 20S rRNA accumulation protein 4 (396 aa).

This sequence belongs to the TSR4 family.

It is found in the cytoplasm. The protein localises to the nucleus. Its subcellular location is the nucleolus. Functionally, required for processing of the 20S pre-rRNA at site D to generate mature 18S rRNA. The chain is Probable 20S rRNA accumulation protein 4 from Schizosaccharomyces pombe (strain 972 / ATCC 24843) (Fission yeast).